A 921-amino-acid polypeptide reads, in one-letter code: Isoleucine--tRNA ligase (921 aa).

The 'HIGH' region signature appears at 57-67 (PYANGDIHMGH). Residue E552 participates in L-isoleucyl-5'-AMP binding. The 'KMSKS' region motif lies at 593–597 (KMSKS). K596 serves as a coordination point for ATP. 4 residues coordinate Zn(2+): C888, C891, C908, and C911.

This sequence belongs to the class-I aminoacyl-tRNA synthetase family. IleS type 1 subfamily. Monomer. Zn(2+) serves as cofactor.

The protein localises to the cytoplasm. The catalysed reaction is tRNA(Ile) + L-isoleucine + ATP = L-isoleucyl-tRNA(Ile) + AMP + diphosphate. Catalyzes the attachment of isoleucine to tRNA(Ile). As IleRS can inadvertently accommodate and process structurally similar amino acids such as valine, to avoid such errors it has two additional distinct tRNA(Ile)-dependent editing activities. One activity is designated as 'pretransfer' editing and involves the hydrolysis of activated Val-AMP. The other activity is designated 'posttransfer' editing and involves deacylation of mischarged Val-tRNA(Ile). In Bacillus mycoides (strain KBAB4) (Bacillus weihenstephanensis), this protein is Isoleucine--tRNA ligase.